The chain runs to 261 residues: UPF0246 protein Vapar_1301 (261 aa).

The protein belongs to the UPF0246 family.

The polypeptide is UPF0246 protein Vapar_1301 (Variovorax paradoxus (strain S110)).